Consider the following 92-residue polypeptide: MVRSVWKGPFVDGYLLGKAEKVRASGRNEVIKIWSRRSTILPQFVGLTFGVHNGNKHIPVSVSEEMVGHKFGEFAPTRTYYGHGADKKAKRK.

Belongs to the universal ribosomal protein uS19 family.

Its function is as follows. Protein S19 forms a complex with S13 that binds strongly to the 16S ribosomal RNA. In Bartonella henselae (strain ATCC 49882 / DSM 28221 / CCUG 30454 / Houston 1) (Rochalimaea henselae), this protein is Small ribosomal subunit protein uS19.